The chain runs to 545 residues: GPI transamidase component PIG-T homolog (545 aa).

The N-terminal stretch at Met1–Ala22 is a signal peptide. The Lumenal portion of the chain corresponds to Thr23–Asn493. Asn168, Asn227, Asn336, Asn391, and Asn467 each carry an N-linked (GlcNAc...) asparagine glycan. A helical transmembrane segment spans residues Val494 to Thr514. The Cytoplasmic portion of the chain corresponds to Arg515–Gly545.

The protein belongs to the PIGT family. In terms of assembly, forms a complex with PIG-S homolog, PIG-U homolog and GPI8. Post-translationally, the disulfide bond between PIGK/GPI8 and PIGT is important for normal enzyme activity.

The protein localises to the endoplasmic reticulum membrane. It functions in the pathway glycolipid biosynthesis; glycosylphosphatidylinositol-anchor biosynthesis. Its function is as follows. Component of the GPI transamidase complex. Involved in transfer of GPI to proteins. The polypeptide is GPI transamidase component PIG-T homolog (gpi16) (Schizosaccharomyces pombe (strain 972 / ATCC 24843) (Fission yeast)).